A 428-amino-acid polypeptide reads, in one-letter code: Enolase 2 (428 aa).

Residue glutamine 162 coordinates (2R)-2-phosphoglycerate. Glutamate 204 (proton donor) is an active-site residue. Aspartate 241, glutamate 285, and aspartate 312 together coordinate Mg(2+). (2R)-2-phosphoglycerate-binding residues include lysine 337, arginine 366, serine 367, and lysine 388. Lysine 337 functions as the Proton acceptor in the catalytic mechanism.

The protein belongs to the enolase family. The cofactor is Mg(2+).

It localises to the cytoplasm. Its subcellular location is the secreted. The protein resides in the cell surface. It carries out the reaction (2R)-2-phosphoglycerate = phosphoenolpyruvate + H2O. It participates in carbohydrate degradation; glycolysis; pyruvate from D-glyceraldehyde 3-phosphate: step 4/5. Functionally, catalyzes the reversible conversion of 2-phosphoglycerate (2-PG) into phosphoenolpyruvate (PEP). It is essential for the degradation of carbohydrates via glycolysis. The protein is Enolase 2 of Lactobacillus johnsonii (strain CNCM I-12250 / La1 / NCC 533).